The chain runs to 390 residues: Succinyl-diaminopimelate desuccinylase (390 aa).

A Zn(2+)-binding site is contributed by His74. Residue Asp76 is part of the active site. Asp107 is a Zn(2+) binding site. The active-site Proton acceptor is Glu140. The Zn(2+) site is built by Glu141, Glu169, and His363.

Belongs to the peptidase M20A family. DapE subfamily. Homodimer. Zn(2+) is required as a cofactor. Co(2+) serves as cofactor.

The enzyme catalyses N-succinyl-(2S,6S)-2,6-diaminopimelate + H2O = (2S,6S)-2,6-diaminopimelate + succinate. The protein operates within amino-acid biosynthesis; L-lysine biosynthesis via DAP pathway; LL-2,6-diaminopimelate from (S)-tetrahydrodipicolinate (succinylase route): step 3/3. Its function is as follows. Catalyzes the hydrolysis of N-succinyl-L,L-diaminopimelic acid (SDAP), forming succinate and LL-2,6-diaminopimelate (DAP), an intermediate involved in the bacterial biosynthesis of lysine and meso-diaminopimelic acid, an essential component of bacterial cell walls. The sequence is that of Succinyl-diaminopimelate desuccinylase from Bartonella bacilliformis (strain ATCC 35685 / KC583 / Herrer 020/F12,63).